A 207-amino-acid polypeptide reads, in one-letter code: Large ribosomal subunit protein uL4 (207 aa).

The disordered stretch occupies residues 43–80; the sequence is RRRSGTAKSKGRSEVSGSTRKLYRQKGTGNARSGSVKS. Over residues 69-78 the composition is skewed to polar residues; sequence GTGNARSGSV.

This sequence belongs to the universal ribosomal protein uL4 family. As to quaternary structure, part of the 50S ribosomal subunit.

Its function is as follows. One of the primary rRNA binding proteins, this protein initially binds near the 5'-end of the 23S rRNA. It is important during the early stages of 50S assembly. It makes multiple contacts with different domains of the 23S rRNA in the assembled 50S subunit and ribosome. In terms of biological role, forms part of the polypeptide exit tunnel. In Desulforapulum autotrophicum (strain ATCC 43914 / DSM 3382 / VKM B-1955 / HRM2) (Desulfobacterium autotrophicum), this protein is Large ribosomal subunit protein uL4.